Reading from the N-terminus, the 341-residue chain is Phosphoribosylformylglycinamidine cyclo-ligase (341 aa).

This sequence belongs to the AIR synthase family.

It is found in the cytoplasm. It catalyses the reaction 2-formamido-N(1)-(5-O-phospho-beta-D-ribosyl)acetamidine + ATP = 5-amino-1-(5-phospho-beta-D-ribosyl)imidazole + ADP + phosphate + H(+). The protein operates within purine metabolism; IMP biosynthesis via de novo pathway; 5-amino-1-(5-phospho-D-ribosyl)imidazole from N(2)-formyl-N(1)-(5-phospho-D-ribosyl)glycinamide: step 2/2. This chain is Phosphoribosylformylglycinamidine cyclo-ligase, found in Caldicellulosiruptor bescii (strain ATCC BAA-1888 / DSM 6725 / KCTC 15123 / Z-1320) (Anaerocellum thermophilum).